The following is a 971-amino-acid chain: MSIRVHELAKELNLSSKEVMSRLESIGVDVKNHLSAVEDQDANRLRTRIQKPQGKEQAVEPRKSVPSQESKNLTQGPAEGNRDKSQGLQVESSRVEGEGRPQGQRPMGDRPQGQRPMGDRPQGQRPMGDRPQGQRPMGDRPQGQRPMGDRPQGQRPMGDRPQGQRPMGDRPQGQRPMGDRPQGQRPMGDRPQGQRPMGDRPQGQRPMGDRPQGQRPMGDRPQGQRPMGDRPQGQRPMGDRPQGQRPMGDRPQGQRPMGDRPQGQRPMGDRPQGQRPMGDRPQGQRPMGDRPQGQRPMGDRPQGQRPMGDRPQGQRPMGDRPQGQRPPQRPPATPGTPAVEQPPKRQIGEKKKPQDRNFERKKEMEKEIRAPRGNRRNVKAAPREIRDTAPKHIVIPESLTVQDLAAKMSRKSGEVIKKLMDMGVMATINQEIDSETAVIIAGEMGVTVEVKIEKPITVIEEIEDDPAELRSRPPVVTVMGHVDHGKTSLLDAIRTTKVTASEAGGITQHIGAYQVEINGQKITFLDTPGHEAFTAMRARGAQVTDIAILVVAADDGVMPQTVEAINHAKAADVPIIVAINKIDKEESNPDRVKQELTEYGLVVEEWGGDTIAVPVSAKARMNIEQLLEMVLLVAEIKELKANPNRSATGTVIEAELDKGKGPVATVLVSKGTLNVGDIILAGSSFGRIRAMVDDKGRRVKKAGPSTPVEVQGLNEVPKAGQVFNVVDDEKHARQIAEARANERKAEEVRQTTKVSLEDLFDRIKEGEVKELNVIIKADVQGSIEALKQSLLRLSTSEVRVNPIHGGVGAITETDIMLAAASNAIIIGFNVRPDANTKATAELQGVDMRLYRVIYDAIEDVKAAMTGMLDPDFKEVVQGRAEVRQVFKVPKVGTVGGSYVLNGKITRHSKIRVIRDGIVIHEGELESLRRFKDDAKEVVEGYECGIGVANFNDIKEGDIIEAFIMEEVKRQL.

The tract at residues 39-379 (DQDANRLRTR…APRGNRRNVK (341 aa)) is disordered. The segment covering 53–63 (QGKEQAVEPRK) has biased composition (basic and acidic residues). Over residues 65–75 (VPSQESKNLTQ) the composition is skewed to polar residues. Positions 310-326 (RPQGQRPMGDRPQGQRP) are enriched in low complexity. Residues 342-370 (PPKRQIGEKKKPQDRNFERKKEMEKEIRA) are compositionally biased toward basic and acidic residues. A tr-type G domain is found at 471 to 640 (SRPPVVTVMG…LLVAEIKELK (170 aa)). Residues 480–487 (GHVDHGKT) form a G1 region. 480–487 (GHVDHGKT) is a binding site for GTP. The tract at residues 505–509 (GITQH) is G2. Positions 526–529 (DTPG) are G3. Residues 526-530 (DTPGH) and 580-583 (NKID) contribute to the GTP site. The tract at residues 580-583 (NKID) is G4. A G5 region spans residues 616 to 618 (SAK).

It belongs to the TRAFAC class translation factor GTPase superfamily. Classic translation factor GTPase family. IF-2 subfamily.

The protein localises to the cytoplasm. In terms of biological role, one of the essential components for the initiation of protein synthesis. Protects formylmethionyl-tRNA from spontaneous hydrolysis and promotes its binding to the 30S ribosomal subunits. Also involved in the hydrolysis of GTP during the formation of the 70S ribosomal complex. The sequence is that of Translation initiation factor IF-2 from Desulfitobacterium hafniense (strain Y51).